The primary structure comprises 87 residues: Small ribosomal subunit protein bS20 (87 aa).

The protein belongs to the bacterial ribosomal protein bS20 family.

Its function is as follows. Binds directly to 16S ribosomal RNA. This Shigella flexneri protein is Small ribosomal subunit protein bS20.